Reading from the N-terminus, the 447-residue chain is Signal recognition particle 54 kDa protein (447 aa).

GTP contacts are provided by residues 103 to 110, 185 to 189, and 245 to 248; these read GVQGSGKT, DTAGR, and TKMD.

It belongs to the GTP-binding SRP family. SRP54 subfamily. As to quaternary structure, part of the signal recognition particle protein translocation system, which is composed of SRP and FtsY. Archaeal SRP consists of a 7S RNA molecule of 300 nucleotides and two protein subunits: SRP54 and SRP19.

It is found in the cytoplasm. It catalyses the reaction GTP + H2O = GDP + phosphate + H(+). Involved in targeting and insertion of nascent membrane proteins into the cytoplasmic membrane. Binds to the hydrophobic signal sequence of the ribosome-nascent chain (RNC) as it emerges from the ribosomes. The SRP-RNC complex is then targeted to the cytoplasmic membrane where it interacts with the SRP receptor FtsY. The sequence is that of Signal recognition particle 54 kDa protein from Saccharolobus islandicus (strain L.S.2.15 / Lassen #1) (Sulfolobus islandicus).